Here is a 220-residue protein sequence, read N- to C-terminus: Large ribosomal subunit protein uL16 (220 aa).

Belongs to the universal ribosomal protein uL16 family. As to quaternary structure, component of the small ribosomal subunit. Mature ribosomes consist of a small (40S) and a large (60S) subunit. The 40S subunit contains about 33 different proteins and 1 molecule of RNA (18S). The 60S subunit contains about 49 different proteins and 3 molecules of RNA (25S, 5.8S and 5S).

The polypeptide is Large ribosomal subunit protein uL16 (RPL10) (Zea mays (Maize)).